The chain runs to 362 residues: dTDP-glucose 4,6-dehydratase (362 aa).

Residues 11-12, 32-35, 58-59, 80-84, and Thr-99 contribute to the NAD(+) site; these read FI, DKLT, DI, and LAAES. Ser-84 is a substrate binding site. Thr-133 is a binding site for substrate. Asp-134 serves as the catalytic Proton donor. Catalysis depends on proton acceptor residues Glu-135 and Tyr-167. NAD(+) is bound at residue 167–171; that stretch reads YSASK. Asn-196 is a substrate binding site. Residue Asn-197 coordinates NAD(+). Substrate contacts are provided by residues 206–207, 222–224, Arg-231, Asn-266, and 300–304; these read KL, PVY, and DRPGH.

This sequence belongs to the NAD(P)-dependent epimerase/dehydratase family. dTDP-glucose dehydratase subfamily. It depends on NAD(+) as a cofactor.

It catalyses the reaction dTDP-alpha-D-glucose = dTDP-4-dehydro-6-deoxy-alpha-D-glucose + H2O. Its pathway is bacterial outer membrane biogenesis; LPS O-antigen biosynthesis. Its function is as follows. Catalyzes the dehydration of dTDP-D-glucose to form dTDP-4-dehydro-6-deoxy-D-glucose via a three-step process involving oxidation, dehydration and reduction. This reaction is a step in the biosynthesis of D-fucofuranose, a component of E.coli O52 O antigen. In Escherichia coli, this protein is dTDP-glucose 4,6-dehydratase (rmlB).